The sequence spans 606 residues: Methionine--tRNA ligase (606 aa).

The short motif at 14–24 is the 'HIGH' region element; that stretch reads PYANGPRHIGH. Residues Cys-146, Cys-149, Cys-159, and Cys-162 each contribute to the Zn(2+) site. The 'KMSKS' region signature appears at 351–355; sequence KFSSS. An ATP-binding site is contributed by Ser-354.

Belongs to the class-I aminoacyl-tRNA synthetase family. MetG type 1 subfamily. Monomer. Zn(2+) serves as cofactor.

It is found in the cytoplasm. It catalyses the reaction tRNA(Met) + L-methionine + ATP = L-methionyl-tRNA(Met) + AMP + diphosphate. Functionally, is required not only for elongation of protein synthesis but also for the initiation of all mRNA translation through initiator tRNA(fMet) aminoacylation. In Thermobifida fusca (strain YX), this protein is Methionine--tRNA ligase.